Here is a 376-residue protein sequence, read N- to C-terminus: Dual-specificity RNA methyltransferase RlmN (376 aa).

Catalysis depends on Glu96, which acts as the Proton acceptor. A Radical SAM core domain is found at 102-341 (DEDRATLCVS…VVVRKTRGDD (240 aa)). An intrachain disulfide couples Cys109 to Cys346. 3 residues coordinate [4Fe-4S] cluster: Cys116, Cys120, and Cys123. S-adenosyl-L-methionine-binding positions include 170–171 (GE), Ser202, 224–226 (SLH), and Asn303. Residue Cys346 is the S-methylcysteine intermediate of the active site.

The protein belongs to the radical SAM superfamily. RlmN family. It depends on [4Fe-4S] cluster as a cofactor.

Its subcellular location is the cytoplasm. The enzyme catalyses adenosine(2503) in 23S rRNA + 2 reduced [2Fe-2S]-[ferredoxin] + 2 S-adenosyl-L-methionine = 2-methyladenosine(2503) in 23S rRNA + 5'-deoxyadenosine + L-methionine + 2 oxidized [2Fe-2S]-[ferredoxin] + S-adenosyl-L-homocysteine. It catalyses the reaction adenosine(37) in tRNA + 2 reduced [2Fe-2S]-[ferredoxin] + 2 S-adenosyl-L-methionine = 2-methyladenosine(37) in tRNA + 5'-deoxyadenosine + L-methionine + 2 oxidized [2Fe-2S]-[ferredoxin] + S-adenosyl-L-homocysteine. In terms of biological role, specifically methylates position 2 of adenine 2503 in 23S rRNA and position 2 of adenine 37 in tRNAs. m2A2503 modification seems to play a crucial role in the proofreading step occurring at the peptidyl transferase center and thus would serve to optimize ribosomal fidelity. The sequence is that of Dual-specificity RNA methyltransferase RlmN from Pseudoalteromonas atlantica (strain T6c / ATCC BAA-1087).